The sequence spans 420 residues: D-tagatose-1,6-bisphosphate aldolase subunit GatZ (420 aa).

It belongs to the GatZ/KbaZ family. GatZ subfamily. Forms a complex with GatY.

It functions in the pathway carbohydrate metabolism; D-tagatose 6-phosphate degradation; D-glyceraldehyde 3-phosphate and glycerone phosphate from D-tagatose 6-phosphate: step 2/2. In terms of biological role, component of the tagatose-1,6-bisphosphate aldolase GatYZ that is required for full activity and stability of the Y subunit. Could have a chaperone-like function for the proper and stable folding of GatY. When expressed alone, GatZ does not show any aldolase activity. Is involved in the catabolism of galactitol. The protein is D-tagatose-1,6-bisphosphate aldolase subunit GatZ of Escherichia coli O6:H1 (strain CFT073 / ATCC 700928 / UPEC).